The sequence spans 453 residues: Pup--protein ligase (453 aa).

Position 9 (Glu-9) interacts with Mg(2+). Residue Arg-53 coordinates ATP. Tyr-55 is a binding site for Mg(2+). The active-site Proton acceptor is Asp-57. Mg(2+) is bound at residue Glu-63. ATP is bound by residues Thr-66 and Trp-420.

Belongs to the Pup ligase/Pup deamidase family. Pup-conjugating enzyme subfamily.

The catalysed reaction is ATP + [prokaryotic ubiquitin-like protein]-L-glutamate + [protein]-L-lysine = ADP + phosphate + N(6)-([prokaryotic ubiquitin-like protein]-gamma-L-glutamyl)-[protein]-L-lysine.. It participates in protein degradation; proteasomal Pup-dependent pathway. The protein operates within protein modification; protein pupylation. Catalyzes the covalent attachment of the prokaryotic ubiquitin-like protein modifier Pup to the proteasomal substrate proteins, thereby targeting them for proteasomal degradation. This tagging system is termed pupylation. The ligation reaction involves the side-chain carboxylate of the C-terminal glutamate of Pup and the side-chain amino group of a substrate lysine. In Kineococcus radiotolerans (strain ATCC BAA-149 / DSM 14245 / SRS30216), this protein is Pup--protein ligase.